Consider the following 412-residue polypeptide: Serine hydroxymethyltransferase (412 aa).

Residues L117 and 121–123 (GHL) each bind (6S)-5,6,7,8-tetrahydrofolate. K226 is subject to N6-(pyridoxal phosphate)lysine.

The protein belongs to the SHMT family. Homodimer. Requires pyridoxal 5'-phosphate as cofactor.

Its subcellular location is the cytoplasm. It catalyses the reaction (6R)-5,10-methylene-5,6,7,8-tetrahydrofolate + glycine + H2O = (6S)-5,6,7,8-tetrahydrofolate + L-serine. Its pathway is one-carbon metabolism; tetrahydrofolate interconversion. The protein operates within amino-acid biosynthesis; glycine biosynthesis; glycine from L-serine: step 1/1. Its function is as follows. Catalyzes the reversible interconversion of serine and glycine with tetrahydrofolate (THF) serving as the one-carbon carrier. This reaction serves as the major source of one-carbon groups required for the biosynthesis of purines, thymidylate, methionine, and other important biomolecules. Also exhibits THF-independent aldolase activity toward beta-hydroxyamino acids, producing glycine and aldehydes, via a retro-aldol mechanism. This chain is Serine hydroxymethyltransferase, found in Natranaerobius thermophilus (strain ATCC BAA-1301 / DSM 18059 / JW/NM-WN-LF).